The primary structure comprises 439 residues: Serine/threonine-protein kinase 2 (439 aa).

Positions 87–439 constitute a Protein kinase domain; sequence NDDFYHISTG…IFSDWINGGN (353 aa). ATP is bound by residues 93–101 and Lys117; that span reads ISTGGYGIV. Catalysis depends on Asp307, which acts as the Proton acceptor.

It belongs to the protein kinase superfamily. Ser/Thr protein kinase family. In terms of processing, phosphorylated in vivo. Autophosphorylated in vitro.

The protein resides in the host endoplasmic reticulum. Its subcellular location is the host endoplasmic reticulum-Golgi intermediate compartment. It catalyses the reaction L-seryl-[protein] + ATP = O-phospho-L-seryl-[protein] + ADP + H(+). It carries out the reaction L-threonyl-[protein] + ATP = O-phospho-L-threonyl-[protein] + ADP + H(+). Functionally, essential serine-protein kinase involved in the early stage of virion morphogenesis. The protein is Serine/threonine-protein kinase 2 (OPG054) of Vaccinia virus (strain Tian Tan) (VACV).